Consider the following 304-residue polypeptide: Dihydroorotate dehydrogenase B (NAD(+)), catalytic subunit (304 aa).

Residues Ser22 and 46–47 (KA) contribute to the FMN site. Substrate-binding positions include Lys46 and 70–74 (NAIGL). FMN-binding residues include Asn100 and Asn128. A substrate-binding site is contributed by Asn128. Cys131 functions as the Nucleophile in the catalytic mechanism. Residues Lys166 and Ile192 each coordinate FMN. A substrate-binding site is contributed by 193–194 (NT). FMN-binding positions include Gly218, 244 to 245 (GG), and 266 to 267 (GT).

Belongs to the dihydroorotate dehydrogenase family. Type 1 subfamily. Heterotetramer of 2 PyrK and 2 PyrD type B subunits. It depends on FMN as a cofactor.

It localises to the cytoplasm. It carries out the reaction (S)-dihydroorotate + NAD(+) = orotate + NADH + H(+). Its pathway is pyrimidine metabolism; UMP biosynthesis via de novo pathway; orotate from (S)-dihydroorotate (NAD(+) route): step 1/1. Functionally, catalyzes the conversion of dihydroorotate to orotate with NAD(+) as electron acceptor. In Fusobacterium nucleatum subsp. nucleatum (strain ATCC 25586 / DSM 15643 / BCRC 10681 / CIP 101130 / JCM 8532 / KCTC 2640 / LMG 13131 / VPI 4355), this protein is Dihydroorotate dehydrogenase B (NAD(+)), catalytic subunit (pyrD).